Reading from the N-terminus, the 626-residue chain is Replication protein E1 (626 aa).

Residues 82-84 (KRK) carry the Nuclear localization signal motif. Serine 90 and serine 106 each carry phosphoserine; by host. Positions 160-327 (QSQQNSNLHL…ILITENSSEV (168 aa)) are DNA-binding region. An SF3 helicase domain is found at 412-576 (GSWLVIMQFL…CPLNEDGKPL (165 aa)). 452 to 459 (GPPDTGKS) is a binding site for ATP. Lysine 533 participates in a covalent cross-link: Glycyl lysine isopeptide (Lys-Gly) (interchain with G-Cter in SUMO). Positions 598–608 (SDQEEEEEGDE) are enriched in acidic residues. The tract at residues 598 to 626 (SDQEEEEEGDENGSRGTFICSTRNSNDFT) is disordered. Residues 616–626 (ICSTRNSNDFT) are compositionally biased toward polar residues.

The protein belongs to the papillomaviridae E1 protein family. Can form hexamers. Interacts with E2 protein; this interaction increases E1 DNA binding specificity. Interacts with host DNA polymerase subunit POLA2. Interacts with host single stranded DNA-binding protein RPA1. Interacts with host TOP1; this interaction stimulates the enzymatic activity of TOP1. In terms of processing, phosphorylated. Post-translationally, sumoylated.

The protein localises to the host nucleus. The catalysed reaction is Couples ATP hydrolysis with the unwinding of duplex DNA by translocating in the 3'-5' direction.. It carries out the reaction ATP + H2O = ADP + phosphate + H(+). Its function is as follows. ATP-dependent DNA 3'-5' helicase required for initiation of viral DNA replication. It forms a complex with the viral E2 protein. The E1-E2 complex binds to the replication origin which contains binding sites for both proteins. During the initial step, a dimer of E1 interacts with a dimer of protein E2 leading to a complex that binds the viral origin of replication with high specificity. Then, a second dimer of E1 displaces the E2 dimer in an ATP-dependent manner to form the E1 tetramer. Following this, two E1 monomers are added to each half of the site, which results in the formation of two E1 trimers on the viral ori. Subsequently, two hexamers will be created. The double hexamer acts as a bi-directional helicase machinery and unwinds the viral DNA and then recruits the host DNA polymerase to start replication. This is Replication protein E1 from Bovine papillomavirus type 5.